Consider the following 196-residue polypeptide: Agamous-like MADS-box protein AGL31 (196 aa).

The 61-residue stretch at 1–61 (MGRKKVEIKR…GKLYKSASGD (61 aa)) folds into the MADS-box domain. In terms of domain architecture, K-box spans 80–170 (ALDLAEKTRN…ASQVGKKTFL (91 aa)).

Expressed in most plant tissues, roots, seedlings, leaves, stems, inflorescences, pollen, siliques and flowers.

It is found in the nucleus. Its function is as follows. Probable transcription factor that prevents vernalization by short periods of cold. Acts as a floral repressor. The protein is Agamous-like MADS-box protein AGL31 (AGL31) of Arabidopsis thaliana (Mouse-ear cress).